The chain runs to 140 residues: Putative pre-16S rRNA nuclease (140 aa).

This sequence belongs to the YqgF nuclease family.

The protein localises to the cytoplasm. In terms of biological role, could be a nuclease involved in processing of the 5'-end of pre-16S rRNA. The sequence is that of Putative pre-16S rRNA nuclease from Vibrio vulnificus (strain CMCP6).